A 261-amino-acid chain; its full sequence is CD40 ligand (261 aa).

Residues 1–22 (MIETYSQPSPRSVATGPPVSMK) lie on the Cytoplasmic side of the membrane. A helical; Signal-anchor for type II membrane protein membrane pass occupies residues 23 to 46 (IFMYLLTVFLITQMIGSALFAVYL). The Extracellular portion of the chain corresponds to 47–261 (HRRLDKIEDE…GFTSFGLLKL (215 aa)). The 140-residue stretch at 122–261 (IAAHVISEAS…GFTSFGLLKL (140 aa)) folds into the THD domain. Cysteines 178 and 218 form a disulfide. N-linked (GlcNAc...) asparagine glycosylation occurs at Asn240.

Belongs to the tumor necrosis factor family. Homotrimer. Interacts with CD28. CD40 ligand, soluble form: Exists as either a monomer or a homotrimer. Forms a ternary complex between CD40 and integrins for CD40-CD40LG signaling. Post-translationally, the soluble form derives from the membrane form by proteolytic processing.

It localises to the cell membrane. It is found in the cell surface. The protein resides in the secreted. In terms of biological role, cytokine that acts as a ligand to CD40/TNFRSF5. Costimulates T-cell proliferation and cytokine production. Its cross-linking on T-cells generates a costimulatory signal which enhances the production of IL4 and IL10 in conjunction with the TCR/CD3 ligation and CD28 costimulation. Induces the activation of NF-kappa-B. Induces the activation of kinases MAPK8 and PAK2 in T-cells. Mediates B-cell proliferation in the absence of co-stimulus as well as IgE production in the presence of IL4. Involved in immunoglobulin class switching. Functionally, acts as a ligand for integrins, specifically ITGA5:ITGB1 and ITGAV:ITGB3; both integrins and the CD40 receptor are required for activation of CD40-CD40LG signaling, which have cell-type dependent effects, such as B-cell activation, NF-kappa-B signaling and anti-apoptotic signaling. The sequence is that of CD40 ligand (CD40LG) from Bos taurus (Bovine).